We begin with the raw amino-acid sequence, 483 residues long: Glutamyl-tRNA(Gln) amidotransferase subunit A (483 aa).

Active-site charge relay system residues include K77 and S152. S176 functions as the Acyl-ester intermediate in the catalytic mechanism.

The protein belongs to the amidase family. GatA subfamily. In terms of assembly, heterotrimer of A, B and C subunits.

The enzyme catalyses L-glutamyl-tRNA(Gln) + L-glutamine + ATP + H2O = L-glutaminyl-tRNA(Gln) + L-glutamate + ADP + phosphate + H(+). Allows the formation of correctly charged Gln-tRNA(Gln) through the transamidation of misacylated Glu-tRNA(Gln) in organisms which lack glutaminyl-tRNA synthetase. The reaction takes place in the presence of glutamine and ATP through an activated gamma-phospho-Glu-tRNA(Gln). In Listeria monocytogenes serotype 4b (strain CLIP80459), this protein is Glutamyl-tRNA(Gln) amidotransferase subunit A.